Here is a 233-residue protein sequence, read N- to C-terminus: Ribosomal RNA small subunit methyltransferase G (233 aa).

The interval 1-25 (MASRQSPMAVSQPDHADRSAALQLT) is disordered. S-adenosyl-L-methionine-binding residues include G85, F90, and R155.

Belongs to the methyltransferase superfamily. RNA methyltransferase RsmG family.

It is found in the cytoplasm. The enzyme catalyses guanosine(527) in 16S rRNA + S-adenosyl-L-methionine = N(7)-methylguanosine(527) in 16S rRNA + S-adenosyl-L-homocysteine. Functionally, specifically methylates the N7 position of guanine in position 527 of 16S rRNA. The sequence is that of Ribosomal RNA small subunit methyltransferase G from Rhodopseudomonas palustris (strain BisB5).